A 25-amino-acid chain; its full sequence is GLLGVLGSVAKHVLPHVVPVIAEHL.

At Leu25 the chain carries Leucine amide.

Expressed by the skin parotoid and/or rostral glands.

It is found in the secreted. Its function is as follows. Antibacterial peptide, that adopts an alpha helical conformation which can disrupt bacterial membranes. Each caerin displays a different antimicrobial specificity. This chain is Caerin-1.2, found in Ranoidea caerulea (Green tree frog).